The chain runs to 1615 residues: Ferredoxin-dependent glutamate synthase, chloroplastic (1615 aa).

Residues 1-52 (MATLPRAAAAAAPSPAAALLPLPRAAPLLAGRAAARSAARRLRARGTRAPPL) constitute a chloroplast transit peptide. Cysteine 97 (nucleophile) is an active-site residue. Positions 97–496 (CGVGFVANLK…PGMMITVDLQ (400 aa)) constitute a Glutamine amidotransferase type-2 domain. 1175-1232 (LSETHQTLIQNGLRERVVLRVDGGFRSGLDVLMAAAMGADEYGFGSVAMIATGCVMAR) contributes to the FMN binding site. The [3Fe-4S] cluster site is built by cysteine 1228, cysteine 1234, and cysteine 1239.

Belongs to the glutamate synthase family. It depends on [3Fe-4S] cluster as a cofactor. FAD serves as cofactor. The cofactor is FMN. As to expression, expressed in leaf blades and at lower levels in roots.

The protein resides in the plastid. It is found in the chloroplast. It catalyses the reaction 2 oxidized [2Fe-2S]-[ferredoxin] + 2 L-glutamate = L-glutamine + 2 reduced [2Fe-2S]-[ferredoxin] + 2-oxoglutarate + 2 H(+). The protein operates within amino-acid biosynthesis; L-glutamate biosynthesis via GLT pathway; L-glutamate from 2-oxoglutarate and L-glutamine (ferredoxin route): step 1/1. It participates in energy metabolism; nitrogen metabolism. Its function is as follows. Involved in glutamate biosynthesis in leaf. Required for the reassimilation of ammonium ions generated during photorespiration. This chain is Ferredoxin-dependent glutamate synthase, chloroplastic (GLU), found in Oryza sativa subsp. japonica (Rice).